Consider the following 321-residue polypeptide: UDP-N-acetyl-alpha-D-glucosaminuronate decarboxylase (321 aa).

Residues glycine 12, phenylalanine 13, isoleucine 14, aspartate 33, asparagine 34, tyrosine 36, glycine 38, leucine 76, threonine 95, alanine 117, tyrosine 148, and lysine 152 each coordinate NAD(+). Catalysis depends on tyrosine 148, which acts as the Proton acceptor.

It belongs to the NAD(P)-dependent epimerase/dehydratase family. In terms of assembly, homodimer. NAD(+) serves as cofactor.

It carries out the reaction UDP-2-acetamido-2-deoxy-alpha-D-glucuronate + H(+) = UDP-N-acetyl-alpha-D-xylosamine + CO2. With respect to regulation, activity is completely inhibited by NADH but not by NADPH. Functionally, decarboxylase involved in the biosynthesis of the nucleotide-sugar UDP-N-acetylxylosamine (UDP-XylNAc). Catalyzes the NAD-dependent decarboxylation of UDP-N-acetylglucosaminuronic acid (UDP-GlcNAcA) to UDP-XylNAc. Cannot use other UDP-uronates, such as UDP-glucuronic acid (UDP-GlcA) and UDP-galacturonic acid (UDP-GalA). This Bacillus cytotoxicus (strain DSM 22905 / CIP 110041 / 391-98 / NVH 391-98) protein is UDP-N-acetyl-alpha-D-glucosaminuronate decarboxylase.